The sequence spans 276 residues: Phosducin-like protein 1 (276 aa).

Phosphoserine is present on residues serine 18, serine 19, serine 20, and serine 42. Residues 18 to 74 (SSSEGEDNGDEGGDNKGASGKSRCSGLTIDTNPDATPAGGFRQQSSTNTGPKGVVKD) form a disordered region. A Phosducin domain is found at 62-272 (SSTNTGPKGV…LIEHGIIVDR (211 aa)). Residues 153 to 276 (FGQVQQLTSH…GIIVDRALYN (124 aa)) are thioredoxin fold.

The protein belongs to the phosducin family. In terms of assembly, forms a complex with the beta and gamma subunits of the GTP-binding proteins. Interacts with the CCT chaperonin complex.

In terms of biological role, functions as a co-chaperone for CCT in the assembly of heterotrimeric G protein complexes, facilitates the assembly of both Gbeta-Ggamma and RGS-Gbeta5 heterodimers. In Drosophila melanogaster (Fruit fly), this protein is Phosducin-like protein 1.